The chain runs to 275 residues: Thiazole synthase (275 aa).

Lysine 108 serves as the catalytic Schiff-base intermediate with DXP. 1-deoxy-D-xylulose 5-phosphate contacts are provided by residues glycine 169, 196-197 (AG), and 218-219 (NT).

This sequence belongs to the ThiG family. In terms of assembly, homotetramer. Forms heterodimers with either ThiH or ThiS.

Its subcellular location is the cytoplasm. It carries out the reaction [ThiS sulfur-carrier protein]-C-terminal-Gly-aminoethanethioate + 2-iminoacetate + 1-deoxy-D-xylulose 5-phosphate = [ThiS sulfur-carrier protein]-C-terminal Gly-Gly + 2-[(2R,5Z)-2-carboxy-4-methylthiazol-5(2H)-ylidene]ethyl phosphate + 2 H2O + H(+). It functions in the pathway cofactor biosynthesis; thiamine diphosphate biosynthesis. Its function is as follows. Catalyzes the rearrangement of 1-deoxy-D-xylulose 5-phosphate (DXP) to produce the thiazole phosphate moiety of thiamine. Sulfur is provided by the thiocarboxylate moiety of the carrier protein ThiS. In vitro, sulfur can be provided by H(2)S. The sequence is that of Thiazole synthase from Ralstonia pickettii (strain 12J).